The primary structure comprises 262 residues: Homeobox-leucine zipper protein HOX24 (262 aa).

2 disordered regions span residues 44–68 (AAGR…RKRR) and 162–189 (LNER…NSVM). The segment covering 46 to 62 (GRGGGDGDGGGGGGGGG) has biased composition (gly residues). The segment at residues 61–122 (GGGERKRRFT…NKRARWRSKQ (62 aa)) is a DNA-binding region (homeobox). A leucine-zipper region spans residues 121–165 (KQIEHDYAALRAQYDALHARVESLRQEKLALAAQVDELRGKLNER).

The protein belongs to the HD-ZIP homeobox family. Class I subfamily. In terms of tissue distribution, expressed in roots and panicles.

The protein resides in the nucleus. Probable transcription factor. In Oryza sativa subsp. indica (Rice), this protein is Homeobox-leucine zipper protein HOX24 (HOX24).